The chain runs to 144 residues: Large ribosomal subunit protein uL16 (144 aa).

It belongs to the universal ribosomal protein uL16 family. Part of the 50S ribosomal subunit.

Functionally, binds 23S rRNA and is also seen to make contacts with the A and possibly P site tRNAs. This Thermoanaerobacter pseudethanolicus (strain ATCC 33223 / 39E) (Clostridium thermohydrosulfuricum) protein is Large ribosomal subunit protein uL16.